We begin with the raw amino-acid sequence, 104 residues long: Transcription elongation factor A protein-like 9 (104 aa).

Basic and acidic residues predominate over residues 1-27; that stretch reads MKSCQKMEGKPENESEPKHEEEPKPEE. The segment at 1-44 is disordered; it reads MKSCQKMEGKPENESEPKHEEEPKPEEKPEEEEKLEEEAKAKGT.

This sequence belongs to the TFS-II family. TFA subfamily.

It is found in the nucleus. In terms of biological role, may be involved in transcriptional regulation. This is Transcription elongation factor A protein-like 9 from Homo sapiens (Human).